Consider the following 595-residue polypeptide: Polyadenylate-binding protein-interacting protein 4 (595 aa).

Residues 48–113 (RLVYFTTCKI…SRSEFVRKPP (66 aa)) form the Sm domain. 2 stretches are compositionally biased toward polar residues: residues 302–313 (GGSSTSDGQKPA) and 326–346 (GDSQ…TSKQ). Disordered regions lie at residues 302-505 (GGSS…FYYP) and 536-595 (MYHP…KGRE). The segment covering 364–382 (DEQRRKNNEEVSHNNRSAE) has biased composition (basic and acidic residues). Residues 416–465 (SQVSSKTKSESSFGQSASRSSESRPGPSTSSRPGLSPSSSIGSMASSEKS) are compositionally biased toward low complexity. The PAM2-like 1; degenerate signature appears at 466–474 (TLNPNAKEF). A PAM2-like 2 motif is present at residues 475–485 (KLNPKAKSFKP). 2 stretches are compositionally biased toward low complexity: residues 488 to 501 (SAAA…ADAS) and 548 to 570 (QPQY…PGQQ).

In terms of tissue distribution, expressed in cauline leaves, stems, rosette leaves, immature siliques and primary inflorescences.

This Arabidopsis thaliana (Mouse-ear cress) protein is Polyadenylate-binding protein-interacting protein 4 (CID4).